Reading from the N-terminus, the 390-residue chain is Anhydro-N-acetylmuramic acid kinase (390 aa).

9 to 16 is a binding site for ATP; sequence GTSLDGID.

Belongs to the anhydro-N-acetylmuramic acid kinase family.

The enzyme catalyses 1,6-anhydro-N-acetyl-beta-muramate + ATP + H2O = N-acetyl-D-muramate 6-phosphate + ADP + H(+). It functions in the pathway amino-sugar metabolism; 1,6-anhydro-N-acetylmuramate degradation. It participates in cell wall biogenesis; peptidoglycan recycling. Its function is as follows. Catalyzes the specific phosphorylation of 1,6-anhydro-N-acetylmuramic acid (anhMurNAc) with the simultaneous cleavage of the 1,6-anhydro ring, generating MurNAc-6-P. Is required for the utilization of anhMurNAc either imported from the medium or derived from its own cell wall murein, and thus plays a role in cell wall recycling. This is Anhydro-N-acetylmuramic acid kinase from Bacillus cereus (strain ATCC 14579 / DSM 31 / CCUG 7414 / JCM 2152 / NBRC 15305 / NCIMB 9373 / NCTC 2599 / NRRL B-3711).